The primary structure comprises 131 residues: UPF0102 protein YraN (131 aa).

The span at 1-19 shows a compositional bias: polar residues; that stretch reads MATVPTRSGSPRQLTTKQT. Residues 1–21 form a disordered region; it reads MATVPTRSGSPRQLTTKQTGD.

This sequence belongs to the UPF0102 family.

This chain is UPF0102 protein YraN, found in Shigella flexneri serotype 5b (strain 8401).